Here is a 151-residue protein sequence, read N- to C-terminus: Cytochrome c-type biogenesis protein CcmE (151 aa).

Topologically, residues 1-8 (MNPQRKKR) are cytoplasmic. A helical; Signal-anchor for type II membrane protein membrane pass occupies residues 9-29 (LFLILGLLAGVAVAVGFALSA). The Periplasmic segment spans residues 30–151 (LQQNINLFYT…QAASGAEAKP (122 aa)). Positions 124 and 128 each coordinate heme.

Belongs to the CcmE/CycJ family.

It localises to the cell inner membrane. Its function is as follows. Heme chaperone required for the biogenesis of c-type cytochromes. Transiently binds heme delivered by CcmC and transfers the heme to apo-cytochromes in a process facilitated by CcmF and CcmH. The polypeptide is Cytochrome c-type biogenesis protein CcmE (Pseudomonas putida (strain W619)).